A 293-amino-acid chain; its full sequence is DOMON domain-containing protein FRRS1L (293 aa).

The signal sequence occupies residues 1–28 (MAGQPLRRPAWVPLLLRLLLAGIAACDA). The segment at 29–60 (SPADDSAGPGGRGPRGRARGDAGADEAVPRHD) is disordered. Residues 46–60 (ARGDAGADEAVPRHD) are compositionally biased toward basic and acidic residues. The 116-residue stretch at 119–234 (CDYFLSYRMI…WYYLFAWGPA (116 aa)) folds into the DOMON domain. A helical transmembrane segment spans residues 271–291 (TFSSPFCLLLIVALTFYLLMG).

In terms of assembly, component of the outer core of AMPAR complex. AMPAR complex consists of an inner core made of 4 pore-forming GluA/GRIA proteins (GRIA1, GRIA2, GRIA3 and GRIA4) and 4 major auxiliary subunits arranged in a twofold symmetry. One of the two pairs of distinct binding sites is occupied either by CNIH2, CNIH3 or CACNG2, CACNG3. The other harbors CACNG2, CACNG3, CACNG4, CACNG8 or GSG1L. This inner core of AMPAR complex is complemented by outer core constituents binding directly to the GluA/GRIA proteins at sites distinct from the interaction sites of the inner core constituents. Outer core constituents include at least PRRT1, PRRT2, CKAMP44/SHISA9, FRRS1L and NRN1. The proteins of the inner and outer core serve as a platform for other, more peripherally associated AMPAR constituents. Alone or in combination, these auxiliary subunits control the gating and pharmacology of the AMPAR complex and profoundly impact their biogenesis and protein processing. Expressed in the brain (at protein level). In embryos expression is evident in the ventral forebrain, but a lower level is seen in the remainder of the embryos. In the adult brain, expressed in the cortex, cerebellum, hippocampus and basal ganglia.

The protein localises to the cell membrane. The protein resides in the synapse. Functionally, important modulator of glutamate signaling pathway. The protein is DOMON domain-containing protein FRRS1L (Frrs1l) of Mus musculus (Mouse).